A 388-amino-acid polypeptide reads, in one-letter code: Na(+)/H(+) antiporter NhaA (388 aa).

Residues Met-1–Asp-11 lie on the Cytoplasmic side of the membrane. Residues Ala-12–Ser-31 traverse the membrane as a helical segment. Over Gly-32 to Asn-58 the chain is Periplasmic. Residues Met-59–Lys-80 form a helical membrane-spanning segment. Residues Arg-81–Phe-96 are Cytoplasmic-facing. A helical membrane pass occupies residues Pro-97 to Asn-116. Topologically, residues Tyr-117 to Thr-122 are periplasmic. A helical membrane pass occupies residues Arg-123–Ala-130. The Cytoplasmic segment spans residues Ala-131–Ile-154. Residues Phe-155 to Thr-176 traverse the membrane as a helical segment. At Asn-177–Ser-180 the chain is on the periplasmic side. The chain crosses the membrane as a helical span at residues Met-181–Cys-200. Residues Gly-201–Arg-204 lie on the Cytoplasmic side of the membrane. The chain crosses the membrane as a helical span at residues Thr-205–Ser-222. Position 223 (Gly-223) is a topological domain, periplasmic. Residues Val-224–Phe-236 form a helical membrane-spanning segment. The Cytoplasmic segment spans residues Ile-237–His-253. A helical transmembrane segment spans residues Val-254–Ala-272. The Periplasmic segment spans residues Gly-273 to Ser-286. The chain crosses the membrane as a helical span at residues Ile-287–Leu-310. Over Ala-311 to Phe-339 the chain is Cytoplasmic. A helical transmembrane segment spans residues Thr-340 to Phe-350. At Gly-351–Leu-357 the chain is on the periplasmic side. Residues Ile-358 to Leu-380 traverse the membrane as a helical segment. Residues Arg-381–Val-388 lie on the Cytoplasmic side of the membrane.

Belongs to the NhaA Na(+)/H(+) (TC 2.A.33) antiporter family.

The protein localises to the cell inner membrane. The enzyme catalyses Na(+)(in) + 2 H(+)(out) = Na(+)(out) + 2 H(+)(in). In terms of biological role, na(+)/H(+) antiporter that extrudes sodium in exchange for external protons. In Shigella flexneri, this protein is Na(+)/H(+) antiporter NhaA.